A 36-amino-acid polypeptide reads, in one-letter code: Zinc metalloproteinase-disintegrin-like VaH1 (36 aa).

A Peptidase M12B domain is found at 1–36 (MVTKYSSIFMSPILSNPPILYFSDCSREXYQKXLTN).

This sequence belongs to the venom metalloproteinase (M12B) family. P-III subfamily. P-IIIa sub-subfamily. Monomer. Zn(2+) is required as a cofactor. The N-terminus is blocked. In terms of processing, glycosylated. Expressed by the venom gland.

The protein resides in the secreted. Its activity is regulated as follows. Inhibited by EDTA, but not inhibited by iodoacetamide, PMSF and pepstatin A. Functionally, snake venom zinc metalloprotease that exhibits strong hemorrhagic activity. It also degrades alpha-chain of fibrinogen (FGA), but not the beta- and the gamma-chains. Possesses potent azocaseinolytic activity and cleaves insulin B-chain, hydrolyzing it at positions Ala(14)-Leu(15), followed by Tyr(16)-Leu(17) and His(10)-Leu(11). In vivo, subcutaneous injection into mice induces strong hemorrhage. This is Zinc metalloproteinase-disintegrin-like VaH1 from Vipera ammodytes ammodytes (Western sand viper).